Reading from the N-terminus, the 418-residue chain is Glutamyl-tRNA reductase (418 aa).

Residues 49–52, S109, 114–116, and Q120 each bind substrate; these read TCNR and EPQ. C50 acts as the Nucleophile in catalysis. NADP(+) is bound at residue 189-194; sequence GAGETI.

This sequence belongs to the glutamyl-tRNA reductase family. Homodimer.

The catalysed reaction is (S)-4-amino-5-oxopentanoate + tRNA(Glu) + NADP(+) = L-glutamyl-tRNA(Glu) + NADPH + H(+). Its pathway is porphyrin-containing compound metabolism; protoporphyrin-IX biosynthesis; 5-aminolevulinate from L-glutamyl-tRNA(Glu): step 1/2. Its function is as follows. Catalyzes the NADPH-dependent reduction of glutamyl-tRNA(Glu) to glutamate 1-semialdehyde (GSA). The protein is Glutamyl-tRNA reductase of Shigella flexneri.